The following is a 227-amino-acid chain: Germin-like protein 3-3 (227 aa).

The first 26 residues, 1–26 (MECFKTTLAGVVLVVLLLQQAPVLRA), serve as a signal peptide directing secretion. Cysteines 36 and 51 form a disulfide. A Cupin type-1 domain is found at 65–217 (SRLATGGDVN…ALRVDAGVVE (153 aa)). Asn-78 and Asn-81 each carry an N-linked (GlcNAc...) asparagine glycan. Residues His-114, His-116, Glu-121, and His-163 each coordinate Mn(2+).

It belongs to the germin family. In terms of assembly, oligomer (believed to be a pentamer but probably hexamer).

The protein resides in the secreted. Its subcellular location is the extracellular space. It localises to the apoplast. May play a role in plant defense. Probably has no oxalate oxidase activity even if the active site is conserved. The protein is Germin-like protein 3-3 of Oryza sativa subsp. japonica (Rice).